The sequence spans 254 residues: Protein GltF (254 aa).

The N-terminal stretch at 1-25 is a signal peptide; sequence MFFKKNLTTAAICAALSVAAFSAMA. Residues 213 to 229 traverse the membrane as a helical segment; sequence PVAITAVTFPLLIDAAV.

The protein to E.coli YhcF.

It is found in the cell membrane. Involved in induction of the so-called NTR enzymes in response to nitrogen deprivation, as well as in glutamate biosynthesis. May mediate the glutamate-dependent repression of the GLT operon. In Escherichia coli (strain K12), this protein is Protein GltF (gltF).